A 1411-amino-acid chain; its full sequence is DNA-directed RNA polymerase subunit beta' (1411 aa).

Zn(2+) is bound by residues cysteine 69, cysteine 71, cysteine 84, and cysteine 87. Aspartate 461, aspartate 463, and aspartate 465 together coordinate Mg(2+). Positions 809, 883, 890, and 893 each coordinate Zn(2+).

This sequence belongs to the RNA polymerase beta' chain family. As to quaternary structure, the RNAP catalytic core consists of 2 alpha, 1 beta, 1 beta' and 1 omega subunit. When a sigma factor is associated with the core the holoenzyme is formed, which can initiate transcription. Mg(2+) serves as cofactor. It depends on Zn(2+) as a cofactor.

The catalysed reaction is RNA(n) + a ribonucleoside 5'-triphosphate = RNA(n+1) + diphosphate. Its function is as follows. DNA-dependent RNA polymerase catalyzes the transcription of DNA into RNA using the four ribonucleoside triphosphates as substrates. The polypeptide is DNA-directed RNA polymerase subunit beta' (Ehrlichia ruminantium (strain Welgevonden)).